Here is an 89-residue protein sequence, read N- to C-terminus: Small ribosomal subunit protein bS20 (89 aa).

Belongs to the bacterial ribosomal protein bS20 family.

Functionally, binds directly to 16S ribosomal RNA. This Syntrophus aciditrophicus (strain SB) protein is Small ribosomal subunit protein bS20.